Consider the following 299-residue polypeptide: 4-hydroxy-tetrahydrodipicolinate synthase (299 aa).

Residue T47 participates in pyruvate binding. Catalysis depends on Y136, which acts as the Proton donor/acceptor. K164 functions as the Schiff-base intermediate with substrate in the catalytic mechanism. A205 provides a ligand contact to pyruvate.

This sequence belongs to the DapA family. As to quaternary structure, homotetramer; dimer of dimers.

The protein localises to the cytoplasm. It carries out the reaction L-aspartate 4-semialdehyde + pyruvate = (2S,4S)-4-hydroxy-2,3,4,5-tetrahydrodipicolinate + H2O + H(+). Its pathway is amino-acid biosynthesis; L-lysine biosynthesis via DAP pathway; (S)-tetrahydrodipicolinate from L-aspartate: step 3/4. In terms of biological role, catalyzes the condensation of (S)-aspartate-beta-semialdehyde [(S)-ASA] and pyruvate to 4-hydroxy-tetrahydrodipicolinate (HTPA). The chain is 4-hydroxy-tetrahydrodipicolinate synthase from Pediococcus pentosaceus (strain ATCC 25745 / CCUG 21536 / LMG 10740 / 183-1w).